The primary structure comprises 490 residues: Probable glycine dehydrogenase (decarboxylating) subunit 2 (490 aa).

N6-(pyridoxal phosphate)lysine is present on Lys273.

The protein belongs to the GcvP family. C-terminal subunit subfamily. The glycine cleavage system is composed of four proteins: P, T, L and H. In this organism, the P 'protein' is a heterodimer of two subunits. The cofactor is pyridoxal 5'-phosphate.

The catalysed reaction is N(6)-[(R)-lipoyl]-L-lysyl-[glycine-cleavage complex H protein] + glycine + H(+) = N(6)-[(R)-S(8)-aminomethyldihydrolipoyl]-L-lysyl-[glycine-cleavage complex H protein] + CO2. Its function is as follows. The glycine cleavage system catalyzes the degradation of glycine. The P protein binds the alpha-amino group of glycine through its pyridoxal phosphate cofactor; CO(2) is released and the remaining methylamine moiety is then transferred to the lipoamide cofactor of the H protein. The chain is Probable glycine dehydrogenase (decarboxylating) subunit 2 from Staphylococcus aureus (strain MRSA252).